A 666-amino-acid polypeptide reads, in one-letter code: Leucine zipper putative tumor suppressor 2 homolog (666 aa).

Disordered stretches follow at residues 1–35 (MAAV…ENTM), 227–249 (IAHS…TSNT), and 266–307 (NLDN…PILN). Composition is skewed to polar residues over residues 11-35 (IDQN…ENTM) and 227-238 (IAHSGTMSDSGR). Composition is skewed to low complexity over residues 239–249 (TSLSSLPTSNT) and 286–304 (RPSN…TGSP). Positions 305–647 (ILNDEILIRE…TVELDAREFN (343 aa)) form a coiled coil.

This sequence belongs to the LZTS2 family.

The protein localises to the cytoplasm. It localises to the cytoskeleton. It is found in the microtubule organizing center. Its subcellular location is the centrosome. Negative regulator of katanin-mediated microtubule severing and release from the centrosome. Required for central spindle formation and the completion of cytokinesis. Negative regulator of the Wnt signaling pathway. Represses beta-catenin-mediated transcriptional activation by promoting the nuclear exclusion of beta-catenin. This Xenopus laevis (African clawed frog) protein is Leucine zipper putative tumor suppressor 2 homolog (lzts2).